Reading from the N-terminus, the 254-residue chain is 5'-nucleotidase SurE (254 aa).

The a divalent metal cation site is built by Asp8, Asp9, Ser39, and Asn91.

It belongs to the SurE nucleotidase family. Requires a divalent metal cation as cofactor.

The protein resides in the cytoplasm. It catalyses the reaction a ribonucleoside 5'-phosphate + H2O = a ribonucleoside + phosphate. Nucleotidase that shows phosphatase activity on nucleoside 5'-monophosphates. The polypeptide is 5'-nucleotidase SurE (Pseudoalteromonas translucida (strain TAC 125)).